A 790-amino-acid chain; its full sequence is MFESVNLDENSPEDRELAKVLSPPGSYLSPASLDSGSSFTNSGTSTSCFEPKNNLPSLSFLNARAGSLGGIFNHKQMTSPSNSNIGGENVESTTSSNDGSNENAGHPTTSEQDQNADHPTISQADDNGHSSLTPNPAVTSTVTDKKGNTVKRKYSRNGCSECKRRRMKCDETKPTCWQCARLNRQCVYVLNPKNKKRRTSNAQRVKEFRKHSTSLDNDHNNARKRQHSSCKAEKKKKVRQNLSEDTTDPKPITDNGKNVPLDEIESLEIPNLDLTTTMNGYDVNLLMQNLNDMVNMKLHDSYLLNEELKGLDLPDLDIPELLPASNVNSSVPISFLVNNVITFNTKLSSFKLGGIHDKYLKIFYYDCLDSIAPFFQNQGNPLRDILLSFAKNEAYLLSSILATGASIAYRKSNNLEDERNYCAYLSHCLSLLGEQFKNESNVLNRIEPIILTVIMLAWDCIYSMNSQWRSHLKGVTDLFKKINAGNSSKVLNVAKCWFKVMETFASISTVFGGSLIDNNDLDAIFDPYDYQYVDSLKFLNIMTPLNEFNLLRGHKEDFDLVIKEVFKSLNTIRSTEKNYFSKEEGLFTKKLDYLLLSSQTSSEKSKDQISYFNTQKILVEIDKQLDYEFIDKSGIIPSDNQSHPRISNIHDNAIDMVTLKNGEEVAISWYDISHQTQVLSFLLIVLLKLLGMPKESSTIQQVVKKIMSFFKFLDSDSPPQNSRTCYSNFAVLIAGLNAMDEETRAIVKRYYKINGGKFQKLTEHNLNRLEKVWYGKNQNYRLEEQDVLTW.

Disordered regions lie at residues 1–50 and 72–157; these read MFES…SCFE and FNHK…YSRN. The span at 35-47 shows a compositional bias: low complexity; sequence SGSSFTNSGTSTS. Composition is skewed to polar residues over residues 75-113 and 120-142; these read KQMT…SEQD and TISQ…TSTV. Residues 159 to 186 constitute a DNA-binding region (zn(2)-C6 fungal-type); it reads CSECKRRRMKCDETKPTCWQCARLNRQC. The disordered stretch occupies residues 195 to 258; the sequence is KKRRTSNAQR…PKPITDNGKN (64 aa). Positions 222-239 are enriched in basic residues; the sequence is ARKRQHSSCKAEKKKKVR.

The protein resides in the nucleus. In terms of biological role, activates the transcription of lysine biosynthesis genes. This activation is dependent on the inducer alpha-aminoadipate semialdehyde and repressed by lysine. The protein is Lysine biosynthesis regulatory protein LYS14 (LYS14) of Saccharomyces cerevisiae (strain ATCC 204508 / S288c) (Baker's yeast).